The sequence spans 297 residues: 4-diphosphocytidyl-2-C-methyl-D-erythritol kinase (297 aa).

The active site involves Lys19. 105–115 (PIASGIGGGSA) contributes to the ATP binding site. Residue Asp147 is part of the active site.

The protein belongs to the GHMP kinase family. IspE subfamily.

It catalyses the reaction 4-CDP-2-C-methyl-D-erythritol + ATP = 4-CDP-2-C-methyl-D-erythritol 2-phosphate + ADP + H(+). It functions in the pathway isoprenoid biosynthesis; isopentenyl diphosphate biosynthesis via DXP pathway; isopentenyl diphosphate from 1-deoxy-D-xylulose 5-phosphate: step 3/6. Catalyzes the phosphorylation of the position 2 hydroxy group of 4-diphosphocytidyl-2C-methyl-D-erythritol. The protein is 4-diphosphocytidyl-2-C-methyl-D-erythritol kinase of Rhizobium etli (strain CIAT 652).